The following is a 116-amino-acid chain: MEAPAQLLFLLLLWLPDTTREIVMTQSPPTLSLSPGERVTLSCRASQSVSSSYLTWYQQKPGQAPRLLIYGASTRATSIPARFSGSGSGTDFTLTISSLQPEDFAVYYCQQDYNLP.

Positions 1 to 21 are cleaved as a signal peptide; it reads MEAPAQLLFLLLLWLPDTTRE. A framework-1 region spans residues 21–43; the sequence is EIVMTQSPPTLSLSPGERVTLSC. Residues 22–116 enclose the Ig-like domain; that stretch reads IVMTQSPPTL…YYCQQDYNLP (95 aa). Cys-43 and Cys-109 form a disulfide bridge. A complementarity-determining-1 region spans residues 44 to 55; sequence RASQSVSSSYLT. Residues 56–70 form a framework-2 region; it reads WYQQKPGQAPRLLIY. A complementarity-determining-2 region spans residues 71–77; it reads GASTRAT. The framework-3 stretch occupies residues 78 to 109; the sequence is SIPARFSGSGSGTDFTLTISSLQPEDFAVYYC. The segment at 110–116 is complementarity-determining-3; that stretch reads QQDYNLP.

Immunoglobulins are composed of two identical heavy chains and two identical light chains; disulfide-linked.

The protein resides in the secreted. The protein localises to the cell membrane. Its function is as follows. Probable non-functional open reading frame (ORF) of V region of the variable domain of immunoglobulin light chains. Non-functional ORF generally cannot participate in the synthesis of a productive immunoglobulin chain due to altered V-(D)-J or switch recombination and/or splicing site (at mRNA level) and/or conserved amino acid change (protein level). Immunoglobulins, also known as antibodies, are membrane-bound or secreted glycoproteins produced by B lymphocytes. In the recognition phase of humoral immunity, the membrane-bound immunoglobulins serve as receptors which, upon binding of a specific antigen, trigger the clonal expansion and differentiation of B lymphocytes into immunoglobulins-secreting plasma cells. Secreted immunoglobulins mediate the effector phase of humoral immunity, which results in the elimination of bound antigens. The antigen binding site is formed by the variable domain of one heavy chain, together with that of its associated light chain. Thus, each immunoglobulin has two antigen binding sites with remarkable affinity for a particular antigen. The variable domains are assembled by a process called V-(D)-J rearrangement and can then be subjected to somatic hypermutations which, after exposure to antigen and selection, allow affinity maturation for a particular antigen. This chain is Probable non-functional immunoglobulin kappa variable 3-7, found in Homo sapiens (Human).